The sequence spans 272 residues: Orotidine 5'-phosphate decarboxylase (272 aa).

Lys95 functions as the Proton donor in the catalytic mechanism.

Belongs to the OMP decarboxylase family. Type 2 subfamily.

The enzyme catalyses orotidine 5'-phosphate + H(+) = UMP + CO2. It participates in pyrimidine metabolism; UMP biosynthesis via de novo pathway; UMP from orotate: step 2/2. This chain is Orotidine 5'-phosphate decarboxylase, found in Cupriavidus metallidurans (strain ATCC 43123 / DSM 2839 / NBRC 102507 / CH34) (Ralstonia metallidurans).